The chain runs to 101 residues: Protein Tat (101 aa).

The tract at residues 1-24 (MEPVDPNLEPWKHPGSQPRTACNN) is interaction with human CREBBP. The tract at residues 1–48 (MEPVDPNLEPWKHPGSQPRTACNNCYCKKCCFHCQVCFTKKGLGISYG) is transactivation. Residues cysteine 22, cysteine 25, and cysteine 27 each coordinate Zn(2+). Positions 22-37 (CNNCYCKKCCFHCQVC) are cysteine-rich. Lysine 28 carries the post-translational modification N6-acetyllysine; by host PCAF. Residues cysteine 30, histidine 33, cysteine 34, and cysteine 37 each contribute to the Zn(2+) site. The interval 38 to 48 (FTKKGLGISYG) is core. A disordered region spans residues 47 to 101 (YGRKKRRQRRRPPQDSQTHQSSLSKQPTSQLRGDPTGPTESKKKVERETETDPVH). The segment covering 48–57 (GRKKRRQRRR) has biased composition (basic residues). A Nuclear localization signal, RNA-binding (TAR), and protein transduction motif is present at residues 49–57 (RKKRRQRRR). The interval 49–86 (RKKRRQRRRPPQDSQTHQSSLSKQPTSQLRGDPTGPTE) is interaction with the host capping enzyme RNGTT. 2 positions are modified to N6-acetyllysine; by host EP300 and GCN5L2: lysine 50 and lysine 51. Asymmetric dimethylarginine; by host PRMT6 occurs at positions 52 and 53. Residues 61–77 (DSQTHQSSLSKQPTSQL) show a composition bias toward polar residues. Lysine 71 participates in a covalent cross-link: Glycyl lysine isopeptide (Lys-Gly) (interchain with G-Cter in ubiquitin). Positions 78–80 (RGD) match the Cell attachment site motif. Over residues 86-101 (ESKKKVERETETDPVH) the composition is skewed to basic and acidic residues.

Belongs to the lentiviruses Tat family. In terms of assembly, interacts with host CCNT1. Associates with the P-TEFb complex composed at least of Tat, P-TEFb (CDK9 and CCNT1), TAR RNA, RNA Pol II. Recruits the HATs CREBBP, TAF1/TFIID, EP300, PCAF and GCN5L2. Interacts with host KAT5/Tip60; this interaction targets the latter to degradation. Interacts with the host deacetylase SIRT1. Interacts with host capping enzyme RNGTT; this interaction stimulates RNGTT. Binds to host KDR, and to the host integrins ITGAV/ITGB3 and ITGA5/ITGB1. Interacts with host KPNB1/importin beta-1 without previous binding to KPNA1/importin alpha-1. Interacts with EIF2AK2. Interacts with host nucleosome assembly protein NAP1L1; this interaction may be required for the transport of Tat within the nucleus, since the two proteins interact at the nuclear rim. Interacts with host C1QBP/SF2P32; this interaction involves lysine-acetylated Tat. Interacts with the host chemokine receptors CCR2, CCR3 and CXCR4. Interacts with host DPP4/CD26; this interaction may trigger an anti-proliferative effect. Interacts with host LDLR. Interacts with the host extracellular matrix metalloproteinase MMP1. Interacts with host PRMT6; this interaction mediates Tat's methylation. Interacts with, and is ubiquitinated by MDM2/Hdm2. Interacts with host PSMC3 and HTATIP2. Interacts with STAB1; this interaction may overcome SATB1-mediated repression of IL2 and IL2RA (interleukin) in T cells by binding to the same domain than HDAC1. Interacts (when acetylated) with human CDK13, thereby increasing HIV-1 mRNA splicing and promoting the production of the doubly spliced HIV-1 protein Nef. Interacts with host TBP; this interaction modulates the activity of transcriptional pre-initiation complex. Interacts with host RELA. Interacts with host PLSCR1; this interaction negatively regulates Tat transactivation activity by altering its subcellular distribution. Post-translationally, asymmetrical arginine methylation by host PRMT6 seems to diminish the transactivation capacity of Tat and affects the interaction with host CCNT1. In terms of processing, acetylation by EP300, CREBBP, GCN5L2/GCN5 and PCAF regulates the transactivation activity of Tat. EP300-mediated acetylation of Lys-50 promotes dissociation of Tat from the TAR RNA through the competitive binding to PCAF's bromodomain. In addition, the non-acetylated Tat's N-terminus can also interact with PCAF. PCAF-mediated acetylation of Lys-28 enhances Tat's binding to CCNT1. Lys-50 is deacetylated by SIRT1. Polyubiquitination by host MDM2 does not target Tat to degradation, but activates its transactivation function and fosters interaction with CCNT1 and TAR RNA. Post-translationally, phosphorylated by EIF2AK2 on serine and threonine residues adjacent to the basic region important for TAR RNA binding and function. Phosphorylation of Tat by EIF2AK2 is dependent on the prior activation of EIF2AK2 by dsRNA.

It is found in the host nucleus. The protein resides in the host nucleolus. It localises to the host cytoplasm. The protein localises to the secreted. Transcriptional activator that increases RNA Pol II processivity, thereby increasing the level of full-length viral transcripts. Recognizes a hairpin structure at the 5'-LTR of the nascent viral mRNAs referred to as the transactivation responsive RNA element (TAR) and recruits the cyclin T1-CDK9 complex (P-TEFb complex) that will in turn hyperphosphorylate the RNA polymerase II to allow efficient elongation. The CDK9 component of P-TEFb and other Tat-activated kinases hyperphosphorylate the C-terminus of RNA Pol II that becomes stabilized and much more processive. Other factors such as HTATSF1/Tat-SF1, SUPT5H/SPT5, and HTATIP2 are also important for Tat's function. Besides its effect on RNA Pol II processivity, Tat induces chromatin remodeling of proviral genes by recruiting the histone acetyltransferases (HATs) CREBBP, EP300 and PCAF to the chromatin. This also contributes to the increase in proviral transcription rate, especially when the provirus integrates in transcriptionally silent region of the host genome. To ensure maximal activation of the LTR, Tat mediates nuclear translocation of NF-kappa-B by interacting with host RELA. Through its interaction with host TBP, Tat may also modulate transcription initiation. Tat can reactivate a latently infected cell by penetrating in it and transactivating its LTR promoter. In the cytoplasm, Tat is thought to act as a translational activator of HIV-1 mRNAs. In terms of biological role, extracellular circulating Tat can be endocytosed by surrounding uninfected cells via the binding to several surface receptors such as CD26, CXCR4, heparan sulfate proteoglycans (HSPG) or LDLR. Neurons are rarely infected, but they internalize Tat via their LDLR. Through its interaction with nuclear HATs, Tat is potentially able to control the acetylation-dependent cellular gene expression. Modulates the expression of many cellular genes involved in cell survival, proliferation or in coding for cytokines or cytokine receptors. Tat plays a role in T-cell and neurons apoptosis. Tat induced neurotoxicity and apoptosis probably contribute to neuroAIDS. Circulating Tat also acts as a chemokine-like and/or growth factor-like molecule that binds to specific receptors on the surface of the cells, affecting many cellular pathways. In the vascular system, Tat binds to ITGAV/ITGB3 and ITGA5/ITGB1 integrins dimers at the surface of endothelial cells and competes with bFGF for heparin-binding sites, leading to an excess of soluble bFGF. This Human immunodeficiency virus type 1 group M subtype B (isolate YU-2) (HIV-1) protein is Protein Tat.